Consider the following 209-residue polypeptide: Thymidylate kinase (209 aa).

Position 10–17 (10–17 (GLEGAGKS)) interacts with ATP.

It belongs to the thymidylate kinase family.

The catalysed reaction is dTMP + ATP = dTDP + ADP. Functionally, phosphorylation of dTMP to form dTDP in both de novo and salvage pathways of dTTP synthesis. This is Thymidylate kinase from Photobacterium profundum (strain SS9).